The following is a 246-amino-acid chain: Zinc import ATP-binding protein ZnuC (246 aa).

The ABC transporter domain maps to 24-243 (LKIENLALAY…RTLNEIFSSY (220 aa)). ATP is bound at residue 56–63 (GPNGGGKT).

This sequence belongs to the ABC transporter superfamily. Zinc importer (TC 3.A.1.15.5) family. The complex is composed of two ATP-binding proteins (ZnuC), two transmembrane proteins (ZnuB) and a solute-binding protein (ZnuA).

Its subcellular location is the cell membrane. It carries out the reaction Zn(2+)(out) + ATP(in) + H2O(in) = Zn(2+)(in) + ADP(in) + phosphate(in) + H(+)(in). Part of the ABC transporter complex ZnuABC involved in zinc import. Responsible for energy coupling to the transport system. In Wolbachia pipientis wMel, this protein is Zinc import ATP-binding protein ZnuC.